The following is a 662-amino-acid chain: Translation factor GUF1, mitochondrial (662 aa).

The transit peptide at 1-28 (MYIHSSRTVLARYGSRTPLLRPSVLGRY) directs the protein to the mitochondrion. The 183-residue stretch at 62-244 (ENYRNFSIVA…AIVDHIPAPD (183 aa)) folds into the tr-type G domain. GTP-binding positions include 71-78 (AHVDHGKS), 137-141 (DTPGH), and 191-194 (NKID).

This sequence belongs to the TRAFAC class translation factor GTPase superfamily. Classic translation factor GTPase family. LepA subfamily.

Its subcellular location is the mitochondrion inner membrane. It catalyses the reaction GTP + H2O = GDP + phosphate + H(+). In terms of biological role, promotes mitochondrial protein synthesis. May act as a fidelity factor of the translation reaction, by catalyzing a one-codon backward translocation of tRNAs on improperly translocated ribosomes. Binds to mitochondrial ribosomes in a GTP-dependent manner. The sequence is that of Translation factor GUF1, mitochondrial from Meyerozyma guilliermondii (strain ATCC 6260 / CBS 566 / DSM 6381 / JCM 1539 / NBRC 10279 / NRRL Y-324) (Yeast).